Consider the following 703-residue polypeptide: Protein CNGC15c (703 aa).

Residues 1 to 10 (MGFDNPRSER) are compositionally biased toward basic and acidic residues. The segment at 1-23 (MGFDNPRSERFEDDPEISKIPTT) is disordered. A run of 5 helical transmembrane segments spans residues 91–111 (IFLV…YLPV), 179–199 (GFWL…WIII), 216–236 (FFII…SSQI), 255–275 (LMLY…LSIE), and 372–392 (FIGE…LFAL). 480 to 565 (LFDQMDERML…WALDPRPSVI (86 aa)) is a binding site for a nucleoside 3',5'-cyclic phosphate. One can recognise an IQ domain in the interval 616–644 (RTWAACFIQAAWRRHKKRKEAAELRAKEN). Positions 676 to 703 (KGVNMHSGTNSGVVSSLQKPTEPDFSDE) are disordered. The segment covering 681 to 694 (HSGTNSGVVSSLQK) has biased composition (polar residues).

Belongs to the cyclic nucleotide-gated cation channel (TC 1.A.1.5) family. In terms of assembly, interacts (via N-terminus) with DMI1 (via c-terminus). The Nod factor has no effect on this interaction, implying that the complex is maintained after activation. As to expression, expressed in roots, stems, leaves, flowers and pods.

The protein resides in the nucleus membrane. Functionally, cyclic nucleotide-gated channel involved in the establishment of both rhizobial and mycorrhizal associations. Required for full activation of nuclear-localized Ca(2+) oscillations by Nod and Myc factors. Simultaneous activation of the K(+)-permeable channel DMI1 and the Ca(2+) channel CNGC15 can give rise to sustained Ca(2+) oscillations. May function during fertilization in both female and male gametophytic Ca(2+) signaling. This chain is Protein CNGC15c, found in Medicago truncatula (Barrel medic).